The following is a 55-amino-acid chain: Rubredoxin-2 (55 aa).

The Rubredoxin-like domain occupies 1-54; it reads MRKWQCVVCGFIYDEALGLPEEGIPAGTRWEDIPADWVCPDCGVGKIDFEMIEI. C6, C9, C39, and C42 together coordinate Fe cation.

The protein belongs to the rubredoxin family. It depends on Fe(3+) as a cofactor.

It localises to the cytoplasm. Its pathway is hydrocarbon metabolism; alkane degradation. Involved in the hydrocarbon hydroxylating system, which transfers electrons from NADH to rubredoxin reductase and then through rubredoxin to alkane 1 monooxygenase. The polypeptide is Rubredoxin-2 (rubA2) (Pseudomonas aeruginosa (strain ATCC 15692 / DSM 22644 / CIP 104116 / JCM 14847 / LMG 12228 / 1C / PRS 101 / PAO1)).